The sequence spans 220 residues: uncharacterized protein (220 aa).

Positions 1–25 (MSCGTYKRGSLTFLLVVALAVPVFC) are cleaved as a signal peptide.

As to expression, nacreous layer of shell (at protein level). Expressed primarily in the mantle with highest level in the mantle pallium and lower level in the mantle edge.

It localises to the secreted. This is an uncharacterized protein from Margaritifera margaritifera (Freshwater pearl mussel).